Consider the following 601-residue polypeptide: Aspartate--tRNA(Asp/Asn) ligase (601 aa).

Glu173 contacts L-aspartate. Residues Gln197–Lys200 form an aspartate region. Position 219 (Arg219) interacts with L-aspartate. Residues Arg219–Glu221 and Gln228 contribute to the ATP site. Residue His456 participates in L-aspartate binding. Glu490 serves as a coordination point for ATP. Arg497 is an L-aspartate binding site. Residue Gly542 to Arg545 coordinates ATP. A disordered region spans residues Gly566–Ala601. A compositionally biased stretch (acidic residues) spans Val592–Ala601.

Belongs to the class-II aminoacyl-tRNA synthetase family. Type 1 subfamily. Homodimer.

The protein localises to the cytoplasm. It carries out the reaction tRNA(Asx) + L-aspartate + ATP = L-aspartyl-tRNA(Asx) + AMP + diphosphate. Its function is as follows. Aspartyl-tRNA synthetase with relaxed tRNA specificity since it is able to aspartylate not only its cognate tRNA(Asp) but also tRNA(Asn). Reaction proceeds in two steps: L-aspartate is first activated by ATP to form Asp-AMP and then transferred to the acceptor end of tRNA(Asp/Asn). This Beutenbergia cavernae (strain ATCC BAA-8 / DSM 12333 / CCUG 43141 / JCM 11478 / NBRC 16432 / NCIMB 13614 / HKI 0122) protein is Aspartate--tRNA(Asp/Asn) ligase.